The primary structure comprises 1770 residues: MSSLSDQLAQVAASNASVAFDRKKRQKLHSASLIYNPKTAATQDYETIFENALGALQELCDIEPRFQVFSKTLFSETSITIDRNVQSKEENKNLDNAINAYLLMVSSKWHLAPALHATEWLVRRFQIHVHNTEILLLSTLNYYQSPIFKRILNIVKLPALFQPLSNFVKNDSNPTNITIIKMFNDTDFLKLYSNYLSKCIKHKSTYTNQLLFVTCCFINLIAFNSSNDEKLEFLVPIILEIAAKLLASGSTDCQIAAHTILIVFTAALPLKKDIVVAAIETILANLKDKKAEQSAFWAVIKISQTLKGQQAIEHLPANIYKIFDKHYTWVRVLDLLTEEPSIKCDKFMTSYIRAMIRFDHSKLDMVVPLVQKLSLEKYEFRSIVIDLIHLSEVLEDKSKLIDLFEFLVKENESLVINCLSSLNLTGEMFEIRLTTSLFSKTNDDNELELLKTLNSHKNTSSDKKEETKPFKQFLEENSEFIVTSNKSMISEDDEKFNKILGLFIEAIGTGYQAGLFLSSFMTTLEARLTFLLRVIVSPSAPIALRLLAMNNISKYIQSIDKELNLFTLIPFLLVAQSGSSKNLKISVKKILGQIGNRPFTKHYFMSNQLYGEGKDIKVPSPSDSEMWTKNFIENYVVENVDISGVFIPKQAEKVFLLFWAQQVLDIPLPYPQYMILNFLGKYVPNTASYSGLFEESISSYLERREELLLRCALNKTDPIQFETAMVNLISNKEKHHFMLDFIINVLQSDYEDLIQILVDRLVEVFATFKTSNQLRIVQEILQSVTKEDQIYDALGTLQSLQIDPDTFVCIFKENSINSESDVTSFPKRRRRRSSTNKAALQSAEVSQIAEDHLKKLTIMLETLDKQKVKGSEELLSSLFFTLADFETLDQDGGLPVLYAEELLASAMLNTIRSLKDQGLTQLQNVRADIIVSAIRTSSSPQVQNKLLLVIGELATLSSEIVLHSVMPIFTFMGAHSVRQDDEFTTQVVEKTILTVVPAFLAANSENITEEIEFLVMSFATALQHIPKHRRLRLFTTLVQALGSDNSLGPLLLLISQQYSNAVKSFKISESRSLVEFTKLLLSKFEVQEQITGFRKFLELYEKLLLANKNPEKKVTLETQALFSSKILNLTQSEFCDLTNNSYDFLTKVIVDTNDDYYDSSRNFKIRLYSIILDPTVSNATRKALDESYSSVLKMILSLIADYPDIFVFETNENSEKQNSVHFIGDILEEIKQSLYGLLHAILDVLPINVFLTTTVPLLESSIDKEIRYHIASNIFDKFENETVDDHELTQSVVHTLNEKIPQEENNVAQVLLNLQSSLINKYGSFFDNNLLVEVLNLASGLISTGPRELQISSIAVITNCVSVMGVKFISFYPKVVPICIKLFNETRASKEELAPQLQLSILLLFTALVKSIPSFLTSDLISLMKLIFFSSGVEVTTRLSVIQLVTEKLDLKNVLGTLLKVWNSEVKESGDSTAISLFLSLLEGTVEKIEKKSATSQSPLFFKLLICLFEFRSQSEFDTNTISRIESSVYAVANTYVLKLNDKVFRPLFVILIKWAFDGEGVSSESITEKERLTAFFKFFNRLQENLKGIITSYFTYLIEPVNELLKRFISGDISDVNLRRLLLNSLTSSLKYDRDEYWQSTSRFELICPSLVNQLSNIEPTIGKYLVKAIGSLAAKNSSVDEHNQMMNKLLVEHMKATCSSNEKLWAVRTVKLIYSKVGESWLVLLPQMVPIIAELLEDDNEEVESEVRGGLVRVMENVLGEPFDRYLD.

2 helical membrane passes run 499 to 519 (ILGLFIEAIGTGYQAGLFLSS) and 528 to 548 (LTFLLRVIVSPSAPIALRLLA). An HEAT repeat occupies 1730-1768 (MVPIIAELLEDDNEEVESEVRGGLVRVMENVLGEPFDRY).

Belongs to the HEATR1/UTP10 family. Component of the ribosomal small subunit (SSU) processome.

The protein localises to the nucleus. It is found in the nucleolus. Its subcellular location is the membrane. Involved in nucleolar processing of pre-18S ribosomal RNA. Involved in ribosome biosynthesis. This Candida glabrata (strain ATCC 2001 / BCRC 20586 / JCM 3761 / NBRC 0622 / NRRL Y-65 / CBS 138) (Yeast) protein is U3 small nucleolar RNA-associated protein 10.